Here is a 123-residue protein sequence, read N- to C-terminus: Large ribosomal subunit protein uL24 (123 aa).

It belongs to the universal ribosomal protein uL24 family. As to quaternary structure, part of the 50S ribosomal subunit.

Its function is as follows. One of two assembly initiator proteins, it binds directly to the 5'-end of the 23S rRNA, where it nucleates assembly of the 50S subunit. One of the proteins that surrounds the polypeptide exit tunnel on the outside of the subunit. In Kineococcus radiotolerans (strain ATCC BAA-149 / DSM 14245 / SRS30216), this protein is Large ribosomal subunit protein uL24.